A 434-amino-acid polypeptide reads, in one-letter code: CinA-like protein (434 aa).

It belongs to the CinA family.

The polypeptide is CinA-like protein (Mycobacterium avium (strain 104)).